Here is a 476-residue protein sequence, read N- to C-terminus: Glutamyl-tRNA(Gln) amidotransferase subunit A (476 aa).

Residues Lys70 and Ser145 each act as charge relay system in the active site. Residue Ser169 is the Acyl-ester intermediate of the active site.

Belongs to the amidase family. GatA subfamily. In terms of assembly, heterotrimer of A, B and C subunits.

It carries out the reaction L-glutamyl-tRNA(Gln) + L-glutamine + ATP + H2O = L-glutaminyl-tRNA(Gln) + L-glutamate + ADP + phosphate + H(+). Functionally, allows the formation of correctly charged Gln-tRNA(Gln) through the transamidation of misacylated Glu-tRNA(Gln) in organisms which lack glutaminyl-tRNA synthetase. The reaction takes place in the presence of glutamine and ATP through an activated gamma-phospho-Glu-tRNA(Gln). This Methanosarcina mazei (strain ATCC BAA-159 / DSM 3647 / Goe1 / Go1 / JCM 11833 / OCM 88) (Methanosarcina frisia) protein is Glutamyl-tRNA(Gln) amidotransferase subunit A.